We begin with the raw amino-acid sequence, 234 residues long: DNA repair protein RecO (234 aa).

It belongs to the RecO family.

Functionally, involved in DNA repair and RecF pathway recombination. This chain is DNA repair protein RecO, found in Hamiltonella defensa subsp. Acyrthosiphon pisum (strain 5AT).